Reading from the N-terminus, the 480-residue chain is MTLILYNTLSRREEPFTPLIPGIVSMYCCGITVYDYCHLGHARTCVVWDVVRRYLEYLGYKVRYIQNFTDIDDKILNRAKNEHTTMAAVAERFIEAYFEDMAKLGVRPADAYPRATHTLDGIKRLVYELEQKGYAYPSDGDVYYSVRRFSDYGKLSGRKLDDLQAGASGRVETDDPEAIKKQDPFDFALWKGAKSGEPSWDSPWGQGRPGWHIECSAMVKEQLGETIDIHVGGSDLIFPHHENEIAQSEAATGKPLAHYWLHNGMVKVAGEKMSKSLGNFITIRELLAKYDPLAVRLLILGAQYRKPIDFSDEGLQAATNGWHTLQEGLSFGYKHLPPDNPAITDQELENRFQEAVNHDFNFAGGLAVLFEIAKELRKEGNNLTHAGKTDSNLAQLAVKWHTLVKLSRVLGLEMAADQGETPVSEGISAADIENLIQQRTEAKKAKNYAESDRIRAELKAQGITLIDQPGGVTKWLREGD.

Position 29 (Cys29) interacts with Zn(2+). The 'HIGH' region motif lies at 31–41; it reads ITVYDYCHLGH. Residues Cys215, His240, and Glu244 each coordinate Zn(2+). Positions 272 to 276 match the 'KMSKS' region motif; it reads KMSKS. Lys275 contacts ATP.

It belongs to the class-I aminoacyl-tRNA synthetase family. Monomer. Zn(2+) is required as a cofactor.

The protein localises to the cytoplasm. The enzyme catalyses tRNA(Cys) + L-cysteine + ATP = L-cysteinyl-tRNA(Cys) + AMP + diphosphate. The sequence is that of Cysteine--tRNA ligase from Microcystis aeruginosa (strain NIES-843 / IAM M-2473).